A 636-amino-acid chain; its full sequence is tRNA uridine 5-carboxymethylaminomethyl modification enzyme MnmG (636 aa).

Residue 18 to 23 (GAGHAG) participates in FAD binding. 281–295 (GPRYCPSIEDKIVRF) serves as a coordination point for NAD(+).

This sequence belongs to the MnmG family. Homodimer. Heterotetramer of two MnmE and two MnmG subunits. Requires FAD as cofactor.

Its subcellular location is the cytoplasm. Functionally, NAD-binding protein involved in the addition of a carboxymethylaminomethyl (cmnm) group at the wobble position (U34) of certain tRNAs, forming tRNA-cmnm(5)s(2)U34. The polypeptide is tRNA uridine 5-carboxymethylaminomethyl modification enzyme MnmG (Lactiplantibacillus plantarum (strain ATCC BAA-793 / NCIMB 8826 / WCFS1) (Lactobacillus plantarum)).